The primary structure comprises 395 residues: LL-diaminopimelate aminotransferase (395 aa).

The substrate site is built by Y14 and G41. Residues Y71, 104 to 105, Y128, N174, Y205, and 233 to 235 each bind pyridoxal 5'-phosphate; these read AK and SFS. Residues K105, Y128, and N174 each coordinate substrate. K236 carries the post-translational modification N6-(pyridoxal phosphate)lysine. Positions 244 and 275 each coordinate pyridoxal 5'-phosphate. 2 residues coordinate substrate: N275 and R368.

Belongs to the class-I pyridoxal-phosphate-dependent aminotransferase family. LL-diaminopimelate aminotransferase subfamily. Homodimer. The cofactor is pyridoxal 5'-phosphate.

The enzyme catalyses (2S,6S)-2,6-diaminopimelate + 2-oxoglutarate = (S)-2,3,4,5-tetrahydrodipicolinate + L-glutamate + H2O + H(+). It functions in the pathway amino-acid biosynthesis; L-lysine biosynthesis via DAP pathway; LL-2,6-diaminopimelate from (S)-tetrahydrodipicolinate (aminotransferase route): step 1/1. Functionally, involved in the synthesis of meso-diaminopimelate (m-DAP or DL-DAP), required for both lysine and peptidoglycan biosynthesis. Catalyzes the direct conversion of tetrahydrodipicolinate to LL-diaminopimelate. This chain is LL-diaminopimelate aminotransferase, found in Chlamydia caviae (strain ATCC VR-813 / DSM 19441 / 03DC25 / GPIC) (Chlamydophila caviae).